Reading from the N-terminus, the 237-residue chain is Sugar fermentation stimulation protein homolog (237 aa).

Belongs to the SfsA family.

This Actinobacillus pleuropneumoniae serotype 5b (strain L20) protein is Sugar fermentation stimulation protein homolog.